The following is a 222-amino-acid chain: Sugar fermentation stimulation protein homolog (222 aa).

It belongs to the SfsA family.

The sequence is that of Sugar fermentation stimulation protein homolog from Thermotoga sp. (strain RQ2).